The sequence spans 952 residues: Glycine dehydrogenase (decarboxylating) (952 aa).

Lysine 703 carries the N6-(pyridoxal phosphate)lysine modification.

It belongs to the GcvP family. As to quaternary structure, the glycine cleavage system is composed of four proteins: P, T, L and H. Requires pyridoxal 5'-phosphate as cofactor.

The catalysed reaction is N(6)-[(R)-lipoyl]-L-lysyl-[glycine-cleavage complex H protein] + glycine + H(+) = N(6)-[(R)-S(8)-aminomethyldihydrolipoyl]-L-lysyl-[glycine-cleavage complex H protein] + CO2. The glycine cleavage system catalyzes the degradation of glycine. The P protein binds the alpha-amino group of glycine through its pyridoxal phosphate cofactor; CO(2) is released and the remaining methylamine moiety is then transferred to the lipoamide cofactor of the H protein. The sequence is that of Glycine dehydrogenase (decarboxylating) from Mycobacterium leprae (strain Br4923).